The chain runs to 300 residues: L-threonine kinase (300 aa).

92–102 lines the ATP pocket; that stretch reads PVAKGMASSTA.

It belongs to the GHMP kinase family. PduX subfamily.

The protein resides in the cytoplasm. The enzyme catalyses L-threonine + ATP = O-phospho-L-threonine + ADP + H(+). It participates in cofactor biosynthesis; adenosylcobalamin biosynthesis. It functions in the pathway polyol metabolism; 1,2-propanediol degradation. Its function is as follows. L-threonine kinase that catalyzes the conversion of L-threonine to L-threonine-O-3-phosphate. Involved in the de novo synthesis of adenosylcobalamin (coenzyme B12) and the assimilation of cobyric acid. Uses ATP; the activity with CTP, GTP or UTP is 6, 11, and 3% of the activity with ATP, respectively. In terms of biological role, the 1,2-propanediol (1,2-PD)-specific bacterial microcompartment (BMC) concentrates low levels of 1,2-PD catabolic enzymes, concentrates volatile reaction intermediates thus enhancing pathway flux and keeps the level of toxic, mutagenic propionaldehyde low. This gene probably benefits from its induction via the Pdu promoter, rather than a physical interaction with the BMC. The protein is L-threonine kinase of Salmonella typhimurium (strain LT2 / SGSC1412 / ATCC 700720).